Reading from the N-terminus, the 124-residue chain is Apolipoprotein C-IV (124 aa).

An N-terminal signal peptide occupies residues 1–27 (MSLLRCRQQTLPSLCLSVLFLACFVAS).

It belongs to the apolipoprotein C4 family.

The protein localises to the secreted. Functionally, may participate in lipoprotein metabolism. This Rattus norvegicus (Rat) protein is Apolipoprotein C-IV (Apoc4).